We begin with the raw amino-acid sequence, 188 residues long: E3 ubiquitin-protein ligase RNF183 (188 aa).

Topologically, residues 1-157 (MAEQQGREPE…RECFRNPHFR (157 aa)) are cytoplasmic. The RING-type zinc-finger motif lies at 11-58 (CPVCWNPFNNTFHTPKVLDCCHSFCVECLAHISLVTPTRRRLLCPLCR). Residues 158–178 (IFAYMMAVILCGTVLFIFSIF) traverse the membrane as a helical; Anchor for type IV membrane protein segment. The Lumenal segment spans residues 179–188 (CTRRFFWGVG).

As to quaternary structure, interacts with FATE1. Interacts with SEC16A. Interacts with BCL2L1. Post-translationally, autoubiquitinated (in vitro).

It is found in the endoplasmic reticulum membrane. The protein resides in the endoplasmic reticulum. It localises to the golgi apparatus. The protein localises to the cis-Golgi network membrane. Its subcellular location is the lysosome. The enzyme catalyses S-ubiquitinyl-[E2 ubiquitin-conjugating enzyme]-L-cysteine + [acceptor protein]-L-lysine = [E2 ubiquitin-conjugating enzyme]-L-cysteine + N(6)-ubiquitinyl-[acceptor protein]-L-lysine.. It participates in protein modification; protein ubiquitination. Functionally, acts as an E3 ubiquitin ligase catalyzing the covalent attachment of ubiquitin moieties onto substrate proteins. Triggers apoptosis in response to prolonged ER stress by mediating the polyubiquitination and subsequent proteasomal degradation of BCL2L1. May collaborate with FATE1 to restrain BIK protein levels thus regulating apoptotic signaling. This chain is E3 ubiquitin-protein ligase RNF183 (RNF183), found in Bos taurus (Bovine).